A 376-amino-acid chain; its full sequence is Chaperone protein DnaJ (376 aa).

Positions 5-70 constitute a J domain; it reads DYYEVLGVAK…QKRAAYDQYG (66 aa). The CR-type zinc-finger motif lies at 136-214; it reads GYDTQIRVPS…CHGSGKVKET (79 aa). Zn(2+) contacts are provided by C149, C152, C166, C169, C188, C191, C202, and C205. 4 CXXCXGXG motif repeats span residues 149-156, 166-173, 188-195, and 202-209; these read CGVCHGSG, CPTCHGQG, CPKCHGTG, and CAHCHGSG.

Belongs to the DnaJ family. Homodimer. The cofactor is Zn(2+).

It is found in the cytoplasm. Functionally, participates actively in the response to hyperosmotic and heat shock by preventing the aggregation of stress-denatured proteins and by disaggregating proteins, also in an autonomous, DnaK-independent fashion. Unfolded proteins bind initially to DnaJ; upon interaction with the DnaJ-bound protein, DnaK hydrolyzes its bound ATP, resulting in the formation of a stable complex. GrpE releases ADP from DnaK; ATP binding to DnaK triggers the release of the substrate protein, thus completing the reaction cycle. Several rounds of ATP-dependent interactions between DnaJ, DnaK and GrpE are required for fully efficient folding. Also involved, together with DnaK and GrpE, in the DNA replication of plasmids through activation of initiation proteins. This chain is Chaperone protein DnaJ, found in Burkholderia mallei (strain NCTC 10229).